The chain runs to 122 residues: Small ribosomal subunit protein uS13 (122 aa).

Positions 95-122 (GLPVRGQRTRTNARTRKGPRKTVAKKKK) are disordered.

This sequence belongs to the universal ribosomal protein uS13 family. As to quaternary structure, part of the 30S ribosomal subunit. Forms a loose heterodimer with protein S19. Forms two bridges to the 50S subunit in the 70S ribosome.

Functionally, located at the top of the head of the 30S subunit, it contacts several helices of the 16S rRNA. In the 70S ribosome it contacts the 23S rRNA (bridge B1a) and protein L5 of the 50S subunit (bridge B1b), connecting the 2 subunits; these bridges are implicated in subunit movement. Contacts the tRNAs in the A and P-sites. The sequence is that of Small ribosomal subunit protein uS13 from Thermoanaerobacter pseudethanolicus (strain ATCC 33223 / 39E) (Clostridium thermohydrosulfuricum).